We begin with the raw amino-acid sequence, 378 residues long: Cytochrome b (378 aa).

4 helical membrane-spanning segments follow: residues 34–54, 78–99, 114–134, and 179–199; these read FGSLLGLCLIIQILTGLFLAM, WFLRICHANGASFFFACLFIHV, WMIGVIILFMVMATGFLGYVL, and FFTFHFILPFIVLALTMIHLL. Heme b-binding residues include histidine 84 and histidine 98. Positions 183 and 197 each coordinate heme b. Histidine 202 provides a ligand contact to a ubiquinone. 4 helical membrane passes run 227-247, 289-309, 321-341, and 348-368; these read YKDIVGFIIFMWILIGFIWKF, LGGVIALVLSIAILMILPFTH, LNQILFWNMVIVASLLTWIGA, and YVLTGQILTVLYFSYFIINPL.

The protein belongs to the cytochrome b family. The main subunits of complex b-c1 are: cytochrome b, cytochrome c1 and the Rieske protein. The cofactor is heme b.

The protein localises to the mitochondrion inner membrane. In terms of biological role, component of the ubiquinol-cytochrome c reductase complex (complex III or cytochrome b-c1 complex) that is part of the mitochondrial respiratory chain. The b-c1 complex mediates electron transfer from ubiquinol to cytochrome c. Contributes to the generation of a proton gradient across the mitochondrial membrane that is then used for ATP synthesis. This is Cytochrome b from Aedes aegypti (Yellowfever mosquito).